The primary structure comprises 340 residues: Deubiquitinase SseL (340 aa).

His-223 is an active-site residue. Residue Cys-285 is the Nucleophile of the active site.

Belongs to the peptidase C79 family.

It is found in the secreted. The protein localises to the host cytoplasm. Functionally, effector proteins function to alter host cell physiology and promote bacterial survival in host tissues. This protease targets the host cell ubiquitin pathway by acting as a deubiquitinase in infected host cells. In Salmonella choleraesuis (strain SC-B67), this protein is Deubiquitinase SseL (sseL).